A 422-amino-acid chain; its full sequence is Zinc finger protein 550 (422 aa).

The region spanning 12-83 (VTFKDVAVTF…KRGLSHATCA (72 aa)) is the KRAB domain. Residues 113–158 (LESSTSSDSRLGRARDEEGLLEMQKGKVTPETDLHKETHLGKVSLE) are disordered. A compositionally biased stretch (basic and acidic residues) spans 122–152 (RLGRARDEEGLLEMQKGKVTPETDLHKETHL). 8 C2H2-type zinc fingers span residues 203–225 (YKCK…QRVH), 231–253 (YECN…YLIH), 259–281 (YKCL…HPIH), 287–309 (YECS…NRTH), 315–337 (FECK…YIIH), 343–365 (YDCM…QRIH), 371–393 (YECT…SVIH), and 399–421 (YKCI…QRVH).

The protein belongs to the krueppel C2H2-type zinc-finger protein family.

The protein localises to the nucleus. Functionally, may be involved in transcriptional regulation. This Homo sapiens (Human) protein is Zinc finger protein 550 (ZNF550).